Here is a 235-residue protein sequence, read N- to C-terminus: Orotidine 5'-phosphate decarboxylase (235 aa).

Substrate-binding positions include Asp10, Lys33, 60–69, Thr123, Arg185, Gln194, Gly214, and Arg215; that span reads DLKMNDIPNT. Lys62 serves as the catalytic Proton donor.

This sequence belongs to the OMP decarboxylase family. Type 1 subfamily. As to quaternary structure, homodimer.

It carries out the reaction orotidine 5'-phosphate + H(+) = UMP + CO2. Its pathway is pyrimidine metabolism; UMP biosynthesis via de novo pathway; UMP from orotate: step 2/2. In terms of biological role, catalyzes the decarboxylation of orotidine 5'-monophosphate (OMP) to uridine 5'-monophosphate (UMP). This Lactobacillus johnsonii (strain CNCM I-12250 / La1 / NCC 533) protein is Orotidine 5'-phosphate decarboxylase.